A 416-amino-acid chain; its full sequence is GTPase Obg (416 aa).

The 157-residue stretch at 1 to 157 folds into the Obg domain; sequence MFQDVLVITV…RRLRLELMLI (157 aa). Disordered stretches follow at residues 25 to 44 and 62 to 82; these read EKFV…GGSV and TYKA…RGGE. Positions 32 to 42 are enriched in gly residues; that stretch reads GPDGGDGGRGG. Over residues 63 to 72 the composition is skewed to basic and acidic residues; sequence YKAEDGEHGR. One can recognise an OBG-type G domain in the interval 158 to 324; that stretch reads ADVGLVGYPN…LKEALHALVR (167 aa). GTP is bound by residues 164–171, 189–193, 211–214, 277–280, and 305–307; these read GYPNAGKS, FTTLS, DIPG, NKVD, and SAL. Residues S171 and T191 each coordinate Mg(2+). Residues 336–414 form the OCT domain; sequence PRKEVQAGVE…IGGLEFEYIP (79 aa).

The protein belongs to the TRAFAC class OBG-HflX-like GTPase superfamily. OBG GTPase family. Monomer. Mg(2+) serves as cofactor.

The protein resides in the cytoplasm. An essential GTPase which binds GTP, GDP and possibly (p)ppGpp with moderate affinity, with high nucleotide exchange rates and a fairly low GTP hydrolysis rate. Plays a role in control of the cell cycle, stress response, ribosome biogenesis and in those bacteria that undergo differentiation, in morphogenesis control. The sequence is that of GTPase Obg from Thermus thermophilus (strain ATCC BAA-163 / DSM 7039 / HB27).